A 467-amino-acid polypeptide reads, in one-letter code: Asparagine--tRNA ligase (467 aa).

Belongs to the class-II aminoacyl-tRNA synthetase family. As to quaternary structure, homodimer.

It localises to the cytoplasm. It catalyses the reaction tRNA(Asn) + L-asparagine + ATP = L-asparaginyl-tRNA(Asn) + AMP + diphosphate + H(+). This chain is Asparagine--tRNA ligase, found in Bacteroides fragilis (strain YCH46).